The chain runs to 205 residues: Imidazoleglycerol-phosphate dehydratase (205 aa).

It belongs to the imidazoleglycerol-phosphate dehydratase family.

It localises to the cytoplasm. The catalysed reaction is D-erythro-1-(imidazol-4-yl)glycerol 3-phosphate = 3-(imidazol-4-yl)-2-oxopropyl phosphate + H2O. It functions in the pathway amino-acid biosynthesis; L-histidine biosynthesis; L-histidine from 5-phospho-alpha-D-ribose 1-diphosphate: step 6/9. The polypeptide is Imidazoleglycerol-phosphate dehydratase (Chloroflexus aggregans (strain MD-66 / DSM 9485)).